A 236-amino-acid chain; its full sequence is Uridylate kinase (236 aa).

9-12 is a binding site for ATP; that stretch reads KFSG. The involved in allosteric activation by GTP stretch occupies residues 17–22; the sequence is GNSGFG. Gly-51 is a binding site for UMP. Gly-52 and Arg-56 together coordinate ATP. Residues Asp-72 and 133-140 each bind UMP; that span reads TGNPFFTT. The ATP site is built by Thr-160, Tyr-166, and Asp-169.

This sequence belongs to the UMP kinase family. Homohexamer.

It is found in the cytoplasm. It catalyses the reaction UMP + ATP = UDP + ADP. It participates in pyrimidine metabolism; CTP biosynthesis via de novo pathway; UDP from UMP (UMPK route): step 1/1. With respect to regulation, allosterically activated by GTP. Inhibited by UTP. In terms of biological role, catalyzes the reversible phosphorylation of UMP to UDP. This chain is Uridylate kinase, found in Helicobacter hepaticus (strain ATCC 51449 / 3B1).